Consider the following 532-residue polypeptide: Flavin-containing monooxygenase 1 (532 aa).

Alanine 2 is modified (N-acetylalanine). At 2–510 (AKRVAIVGAG…TRIVQESPTP (509 aa)) the chain is on the lumenal side. Residues 9–13 (GAGVS), glutamate 32, 40–41 (LW), and 61–62 (NS) contribute to the FAD site. NADP(+)-binding positions include 60–61 (SN) and 195–198 (SGTD). A helical transmembrane segment spans residues 511-531 (FASLLKLLSLLALLMAIFLIF). Leucine 532 is a topological domain (cytoplasmic).

The protein belongs to the FMO family. The cofactor is FAD. In terms of tissue distribution, liver.

The protein localises to the endoplasmic reticulum membrane. It catalyses the reaction hypotaurine + NADPH + O2 + H(+) = taurine + NADP(+) + H2O. It carries out the reaction hypotaurine + NADH + O2 + H(+) = taurine + NAD(+) + H2O. The catalysed reaction is trimethylamine + NADPH + O2 = trimethylamine N-oxide + NADP(+) + H2O. The enzyme catalyses N,N-dimethylaniline + NADPH + O2 + H(+) = N,N-dimethylaniline N-oxide + NADP(+) + H2O. In terms of biological role, broad spectrum monooxygenase that catalyzes the oxygenation of a wide variety of nitrogen- and sulfur-containing compounds including xenobiotics. Catalyzes the S-oxygenation of hypotaurine to produce taurine, an organic osmolyte involved in cell volume regulation as well as a variety of cytoprotective and developmental processes. In vitro, catalyzes the N-oxygenation of trimethylamine (TMA) to produce trimethylamine N-oxide (TMAO) and could therefore participate to the detoxification of this compound that is generated by the action of gut microbiota from dietary precursors such as choline, choline containing compounds, betaine or L-carnitine. The chain is Flavin-containing monooxygenase 1 (FMO1) from Canis lupus familiaris (Dog).